The sequence spans 444 residues: MQVTETQKEGLKRAYTITVTAAELDAKVQEKLVEAQPDIEMKGFRKGKVPLAMLKKQFGPRLLGDAMQDAIDGAMRDHLETSGDRPAMQPEVRMVDGETWKEGTDVVVEMKYEALPEIPEIETSKVSLERLVVKADEAAIEEALKNLAESAQNFEDRRKGSKAKDGDQVVIDFKGSVDGELFEGGSAEDYPLVLGSGSFIPGFEEQLVGTKVDDEVTVKVSFPAEYGAKHLAGKEAEFACTVKAVKAPKAAELDDELAKKYGAEDLAALKSQISERLEAEYKGASRAVLKRALLDQLDQMVSFELPSKLVEAEAHQIAHQLWHEEHPEEHGHNHGNIEPTDEHKALAERRVRLGLLLAEIGRKAEVTVTDAEMTQAVLAQARQYPGQERAYFEFVQKNPQIQQQLRAPIFEDKVVDLILEGATVTEKEVGKDDLQKAIEALDEM.

The 86-residue stretch at 166 to 251 (GDQVVIDFKG…VKAVKAPKAA (86 aa)) folds into the PPIase FKBP-type domain.

This sequence belongs to the FKBP-type PPIase family. Tig subfamily.

It is found in the cytoplasm. The enzyme catalyses [protein]-peptidylproline (omega=180) = [protein]-peptidylproline (omega=0). Its function is as follows. Involved in protein export. Acts as a chaperone by maintaining the newly synthesized protein in an open conformation. Functions as a peptidyl-prolyl cis-trans isomerase. The polypeptide is Trigger factor (Cereibacter sphaeroides (strain ATCC 17029 / ATH 2.4.9) (Rhodobacter sphaeroides)).